Here is a 173-residue protein sequence, read N- to C-terminus: Small ribosomal subunit protein uS5 (173 aa).

The S5 DRBM domain maps to 17 to 80 (LREKMIAVNR…EEARRNMVKV (64 aa)).

The protein belongs to the universal ribosomal protein uS5 family. As to quaternary structure, part of the 30S ribosomal subunit. Contacts proteins S4 and S8.

Its function is as follows. With S4 and S12 plays an important role in translational accuracy. In terms of biological role, located at the back of the 30S subunit body where it stabilizes the conformation of the head with respect to the body. This is Small ribosomal subunit protein uS5 from Acidovorax sp. (strain JS42).